Here is a 1041-residue protein sequence, read N- to C-terminus: Probable rhamnogalacturonate lyase C (1041 aa).

An N-terminal signal peptide occupies residues 1–21; the sequence is MFASTLRKTFVFLGLATYSAA. 8 N-linked (GlcNAc...) asparagine glycosylation sites follow: Asn28, Asn94, Asn116, Asn142, Asn231, Asn283, Asn528, and Asn634. The disordered stretch occupies residues 703–728; it reads ISRPCPRKGGTRRRKKERKKEGKKQG. The segment covering 707–720 has biased composition (basic residues); sequence CPRKGGTRRRKKER. The N-linked (GlcNAc...) asparagine glycan is linked to Asn864.

It belongs to the polysaccharide lyase 4 family.

Its subcellular location is the secreted. It catalyses the reaction Endotype eliminative cleavage of L-alpha-rhamnopyranosyl-(1-&gt;4)-alpha-D-galactopyranosyluronic acid bonds of rhamnogalacturonan I domains in ramified hairy regions of pectin leaving L-rhamnopyranose at the reducing end and 4-deoxy-4,5-unsaturated D-galactopyranosyluronic acid at the non-reducing end.. Functionally, pectinolytic enzymes consist of four classes of enzymes: pectin lyase, polygalacturonase, pectin methylesterase and rhamnogalacturonase. Degrades the rhamnogalacturonan I (RG-I) backbone of pectin. The polypeptide is Probable rhamnogalacturonate lyase C (rglC) (Emericella nidulans (strain FGSC A4 / ATCC 38163 / CBS 112.46 / NRRL 194 / M139) (Aspergillus nidulans)).